We begin with the raw amino-acid sequence, 127 residues long: uncharacterized protein (127 aa).

Residues 1–13 (MEAGNRSGTPQHR) show a composition bias toward polar residues. The segment at 1–26 (MEAGNRSGTPQHRQLSEIRQDLSSSP) is disordered.

This is an uncharacterized protein from Saccharomyces cerevisiae (strain ATCC 204508 / S288c) (Baker's yeast).